Here is a 564-residue protein sequence, read N- to C-terminus: CTP synthase (564 aa).

An amidoligase domain region spans residues 1–265 (MTKFVFVTGG…DEIVCHRLDI (265 aa)). Ser-13 provides a ligand contact to CTP. Ser-13 provides a ligand contact to UTP. ATP-binding positions include 14 to 19 (SLGKGI) and Asp-71. Residues Asp-71 and Glu-139 each coordinate Mg(2+). Residues 146–148 (DIE), 186–191 (KTKPTQ), and Lys-222 each bind CTP. UTP is bound by residues 186–191 (KTKPTQ) and Lys-222. Residues 290-543 (SIALVGKYVD…IQAAISFAGQ (254 aa)) form the Glutamine amidotransferase type-1 domain. Residue Gly-351 participates in L-glutamine binding. Cys-378 serves as the catalytic Nucleophile; for glutamine hydrolysis. Residues 379–382 (LGMQ), Glu-402, and Arg-469 contribute to the L-glutamine site. Active-site residues include His-516 and Glu-518.

The protein belongs to the CTP synthase family. Homotetramer.

The enzyme catalyses UTP + L-glutamine + ATP + H2O = CTP + L-glutamate + ADP + phosphate + 2 H(+). The catalysed reaction is L-glutamine + H2O = L-glutamate + NH4(+). It catalyses the reaction UTP + NH4(+) + ATP = CTP + ADP + phosphate + 2 H(+). The protein operates within pyrimidine metabolism; CTP biosynthesis via de novo pathway; CTP from UDP: step 2/2. Its activity is regulated as follows. Allosterically activated by GTP, when glutamine is the substrate; GTP has no effect on the reaction when ammonia is the substrate. The allosteric effector GTP functions by stabilizing the protein conformation that binds the tetrahedral intermediate(s) formed during glutamine hydrolysis. Inhibited by the product CTP, via allosteric rather than competitive inhibition. Its function is as follows. Catalyzes the ATP-dependent amination of UTP to CTP with either L-glutamine or ammonia as the source of nitrogen. Regulates intracellular CTP levels through interactions with the four ribonucleotide triphosphates. The chain is CTP synthase from Nitrosomonas europaea (strain ATCC 19718 / CIP 103999 / KCTC 2705 / NBRC 14298).